The primary structure comprises 353 residues: Nif-specific regulatory protein (353 aa).

The region spanning 12 to 240 (IVGESAALKE…LQNCTQRTAT (229 aa)) is the Sigma-54 factor interaction domain. ATP-binding positions include 40-47 (GESGTGKE) and 103-112 (AHGGTLLLDE). The segment at residues 325–344 (QAKAARLLGRTPRQVGYSLR) is a DNA-binding region (H-T-H motif).

Interacts with sigma-54.

In terms of biological role, required for activation of most nif operons, which are directly involved in nitrogen fixation. This Rhizobium leguminosarum bv. trifolii protein is Nif-specific regulatory protein (nifA).